A 975-amino-acid chain; its full sequence is Exportin-2 (975 aa).

One can recognise an Importin N-terminal domain in the interval 29–105; that stretch reads AEKLLESTEL…KTLIVTLMLH (77 aa).

It belongs to the XPO2/CSE1 family. As to quaternary structure, binds with high affinity to importin-alpha only in the presence of RanGTP.

Its subcellular location is the cytoplasm. The protein resides in the nucleus. Its function is as follows. Export receptor for importin alpha. Mediates importin-alpha re-export from the nucleus to the cytoplasm after import substrates have been released into the nucleoplasm. The protein is Exportin-2 of Drosophila melanogaster (Fruit fly).